Consider the following 236-residue polypeptide: 2,3,4,5-tetrahydropyridine-2,6-dicarboxylate N-acetyltransferase (236 aa).

This sequence belongs to the transferase hexapeptide repeat family. DapH subfamily.

The catalysed reaction is (S)-2,3,4,5-tetrahydrodipicolinate + acetyl-CoA + H2O = L-2-acetamido-6-oxoheptanedioate + CoA. It functions in the pathway amino-acid biosynthesis; L-lysine biosynthesis via DAP pathway; LL-2,6-diaminopimelate from (S)-tetrahydrodipicolinate (acetylase route): step 1/3. Catalyzes the transfer of an acetyl group from acetyl-CoA to tetrahydrodipicolinate. The protein is 2,3,4,5-tetrahydropyridine-2,6-dicarboxylate N-acetyltransferase of Bacillus subtilis (strain 168).